A 161-amino-acid polypeptide reads, in one-letter code: Large ribosomal subunit protein uL10 (161 aa).

It belongs to the universal ribosomal protein uL10 family. In terms of assembly, part of the ribosomal stalk of the 50S ribosomal subunit. The N-terminus interacts with L11 and the large rRNA to form the base of the stalk. The C-terminus forms an elongated spine to which L12 dimers bind in a sequential fashion forming a multimeric L10(L12)X complex.

Functionally, forms part of the ribosomal stalk, playing a central role in the interaction of the ribosome with GTP-bound translation factors. In Malacoplasma penetrans (strain HF-2) (Mycoplasma penetrans), this protein is Large ribosomal subunit protein uL10.